Reading from the N-terminus, the 567-residue chain is Probable diguanylate cyclase DgcQ (567 aa).

2 helical membrane-spanning segments follow: residues Phe20–Leu40 and Ile357–Ile377. One can recognise a GGDEF domain in the interval Gln425–Ala560. Residue Asp433 coordinates Mg(2+). Substrate-binding residues include Asn441, His446, and Asp450. Glu476 lines the Mg(2+) pocket. Glu476 serves as the catalytic Proton acceptor.

In terms of assembly, homodimer. The cofactor is Mg(2+).

It localises to the cell inner membrane. The catalysed reaction is 2 GTP = 3',3'-c-di-GMP + 2 diphosphate. The protein operates within glycan metabolism; bacterial cellulose biosynthesis. It participates in purine metabolism; 3',5'-cyclic di-GMP biosynthesis. Functionally, catalyzes the synthesis of cyclic-di-GMP (c-di-GMP) via the condensation of 2 GTP molecules. Cyclic-di-GMP is a second messenger which controls cell surface-associated traits in bacteria. Involved in the regulation of cellulose production. This Salmonella typhi protein is Probable diguanylate cyclase DgcQ.